A 271-amino-acid chain; its full sequence is MWELRSIAFSRAVLAEFLATLLFVFFGLGSALNWPQALPSVLQIAMAFGLAIGTLVQALGHVSGAHINPAVTVACLVGCHVSFLRAVFYVAAQLLGAVAGAALLHEITPPAIRGDLAVNALNNNSTAGQAVTVELFLTLQLVLCIFPSTDKRRGKQLGHPALSIGFSVALGHLLGIHYTGCSMNPARSLAPAIVTGKFDDHWVFWIGPLVGAIVASLLYNYVLFPPAKSLSERLAVLKGLEPDTDWEEREVRRRQSVELHSPQSLPRGTKA.

The Cytoplasmic segment spans residues Met-1–Arg-11. Residues Ala-12–Leu-32 form a helical membrane-spanning segment. The Extracellular segment spans residues Asn-33–Ser-40. Residues Val-41–Leu-59 form a helical membrane-spanning segment. The Cytoplasmic portion of the chain corresponds to Gly-60–Gly-64. The discontinuously helical intramembrane region spans Ala-65–Ala-74. An NPA 1 motif is present at residues Asn-68–Ala-70. Topologically, residues Cys-75–Arg-85 are cytoplasmic. A helical transmembrane segment spans residues Ala-86–Ile-107. The Extracellular portion of the chain corresponds to Thr-108–Ala-127. Asn-123 and Asn-124 each carry an N-linked (GlcNAc...) asparagine glycan. The chain crosses the membrane as a helical span at residues Gly-128–Ser-148. Over Thr-149 to Gln-156 the chain is Cytoplasmic. Residues Leu-157–Ile-176 traverse the membrane as a helical segment. Over His-177–Gly-180 the chain is Extracellular. The segment at residues Cys-181–Ile-193 is an intramembrane region (discontinuously helical). The NPA 2 signature appears at Asn-184–Ala-186. Over Val-194–His-201 the chain is Extracellular. The chain crosses the membrane as a helical span at residues Trp-202 to Val-222. Topologically, residues Leu-223 to Ala-271 are cytoplasmic. The disordered stretch occupies residues Arg-249 to Ala-271. Ser-256 is subject to Phosphoserine. Residues Ser-261–Ala-271 are compositionally biased toward polar residues.

Belongs to the MIP/aquaporin (TC 1.A.8) family. As to quaternary structure, homotetramer. In terms of processing, ser-256 phosphorylation is necessary and sufficient for expression at the apical membrane. Endocytosis is not phosphorylation-dependent. N-glycosylated. In terms of tissue distribution, expressed in renal collecting tubules.

The protein localises to the apical cell membrane. It is found in the basolateral cell membrane. Its subcellular location is the cell membrane. The protein resides in the cytoplasmic vesicle membrane. It localises to the golgi apparatus. The protein localises to the trans-Golgi network membrane. The enzyme catalyses H2O(in) = H2O(out). The catalysed reaction is glycerol(in) = glycerol(out). Its function is as follows. Forms a water-specific channel that provides the plasma membranes of renal collecting duct with high permeability to water, thereby permitting water to move in the direction of an osmotic gradient. Could also be permeable to glycerol. In Ovis aries (Sheep), this protein is Aquaporin-2.